A 66-amino-acid chain; its full sequence is MKYTELKDKSIKELEELLHAKKAELFELHVKLKAMQLSNPNEIKKARRNIARINTAINAYYSSSVE.

The protein belongs to the universal ribosomal protein uL29 family.

This is Large ribosomal subunit protein uL29 from Helicobacter pylori (strain Shi470).